Reading from the N-terminus, the 572-residue chain is MRTSQYLLSTLKETPADAEVISHQLMLRAGMIRKLASGLYTWLPTGLRVLKKVENIVREEMNNAGAIEVSMPVVQPAELWQESGRWEQYGPELLRFVDRGDRAFVLGPTHEEVITDLIRNELSSYKQLPLNFYQIQTKFRDEVRPRFGVMRSREFLMKDAYSFHTTQESLQQTYDAMYEAYSKIFTRMGLDFRPVQADTGSIGGSASHEFQVLAQSGEDDIVFSDTSDFAANIELAEAVAPLTPRAAATQEMTLVDTPNAKTIAELVEQFNLPIEKTVKTLLVKAAEGSEFPLVALLVRGDHELNEVKAEKLAQVASPLTFATEAEIRAAVNAGPGSLGPVNMPVPVVIDRSVAAMSDFAAGANIDGKHYFGINWDRDVATPQVADIRNVVAGDPSPDGQGTLLIKRGIEVGHIFQLGTKYSDALKASVQGEDGRNQVLTMGCYGIGVTRVVAAAIEQNHDERGIVWPDAIAPFQVAILPMNMHKSFRVQELAEKLYAELRAKGIDVLMDDRKERPGVMFADMELIGIPHTVVIGDRNLDNDEIEYKYRRDGEKKMIKTGDILDYLVANVKR.

Belongs to the class-II aminoacyl-tRNA synthetase family. ProS type 1 subfamily. In terms of assembly, homodimer.

It localises to the cytoplasm. The enzyme catalyses tRNA(Pro) + L-proline + ATP = L-prolyl-tRNA(Pro) + AMP + diphosphate. Catalyzes the attachment of proline to tRNA(Pro) in a two-step reaction: proline is first activated by ATP to form Pro-AMP and then transferred to the acceptor end of tRNA(Pro). As ProRS can inadvertently accommodate and process non-cognate amino acids such as alanine and cysteine, to avoid such errors it has two additional distinct editing activities against alanine. One activity is designated as 'pretransfer' editing and involves the tRNA(Pro)-independent hydrolysis of activated Ala-AMP. The other activity is designated 'posttransfer' editing and involves deacylation of mischarged Ala-tRNA(Pro). The misacylated Cys-tRNA(Pro) is not edited by ProRS. The protein is Proline--tRNA ligase of Cronobacter sakazakii (strain ATCC BAA-894) (Enterobacter sakazakii).